A 222-amino-acid polypeptide reads, in one-letter code: N-acetyltransferase 8B (222 aa).

The Cytoplasmic segment spans residues 1-42 (MVSYHICEYQDSDYKSVVDVFTKGAEEYIPSTFRHLLLLPRT). A helical; Signal-anchor for type II membrane protein transmembrane segment spans residues 43 to 67 (LLLLLGVSLALVLVSGSWLLAVVCI). Positions 62 to 217 (LAVVCIFFLL…VGIRFVQLNY (156 aa)) constitute an N-acetyltransferase domain. Over 68–222 (FFLLPFLWFL…VQLNYSFPSA (155 aa)) the chain is Lumenal. Residue lysine 99 is modified to N6-acetyllysine.

Belongs to the NAT8 family. In terms of processing, acetylation on Lys-99 modulates enzymatic activity.

It localises to the endoplasmic reticulum-Golgi intermediate compartment membrane. Its subcellular location is the endoplasmic reticulum membrane. The enzyme catalyses L-lysyl-[protein] + acetyl-CoA = N(6)-acetyl-L-lysyl-[protein] + CoA + H(+). In terms of biological role, endoplasmic reticulum (ER)-membrane-bound lysine N-acetyltransferase catalyzing the N6-acetylation of lysine residues in the lumen of the ER in various proteins, including PROM1 and BACE1, using acetyl-CoA as acetyl donor. Thereby, may regulate apoptosis through the acetylation and the regulation of the expression of PROM1. Acetylates and stabilizes BACE1 immature protein, leading to increased steady-state levels in neurons. By acting on BACE1 expression, may regulate amyloid beta-peptide formation. N(6)-lysine acetylation in ER maintains protein homeostasis and regulates reticulophagy. In Rattus norvegicus (Rat), this protein is N-acetyltransferase 8B.